We begin with the raw amino-acid sequence, 342 residues long: Galactose mutarotase (342 aa).

The residue at position 2 (Ala2) is an N-acetylalanine. Ser14 carries the post-translational modification Phosphoserine. Beta-D-galactose contacts are provided by residues 81–82 (NR) and His107. A Phosphoserine modification is found at Ser124. His176 (proton donor) is an active-site residue. Residues 176-178 (HSY), Asp243, Gln279, and Glu307 each bind beta-D-galactose. Residue Glu307 is the Proton acceptor of the active site.

It belongs to the aldose epimerase family. In terms of assembly, monomer.

It is found in the cytoplasm. The enzyme catalyses alpha-D-galactose = beta-D-galactose. It catalyses the reaction alpha-D-glucose = beta-D-glucose. It participates in carbohydrate metabolism; hexose metabolism. It functions in the pathway carbohydrate metabolism; galactose metabolism. Mutarotase that catalyzes the interconversion of beta-D-galactose and alpha-D-galactose during galactose metabolism. Beta-D-galactose is metabolized in the liver into glucose 1-phosphate, the primary metabolic fuel, by the action of four enzymes that constitute the Leloir pathway: GALM, GALK1 (galactokinase), GALT (galactose-1-phosphate uridylyltransferase) and GALE (UDP-galactose-4'-epimerase). Involved in the maintenance of the equilibrium between the beta- and alpha-anomers of galactose, therefore ensuring a sufficient supply of the alpha-anomer for GALK1. Also active on D-glucose although shows a preference for galactose over glucose. The protein is Galactose mutarotase of Homo sapiens (Human).